Consider the following 356-residue polypeptide: Dual-specificity RNA methyltransferase RlmN (356 aa).

Glu-89 serves as the catalytic Proton acceptor. The Radical SAM core domain maps to 108–341 (SHARYTICVS…CTIRESKGLD (234 aa)). Cys-115 and Cys-346 are oxidised to a cystine. [4Fe-4S] cluster is bound by residues Cys-122, Cys-126, and Cys-129. S-adenosyl-L-methionine-binding positions include 172 to 173 (GE), Ser-204, 227 to 229 (SLH), and Asn-303. Cys-346 functions as the S-methylcysteine intermediate in the catalytic mechanism.

This sequence belongs to the radical SAM superfamily. RlmN family. Requires [4Fe-4S] cluster as cofactor.

The protein localises to the cytoplasm. The enzyme catalyses adenosine(2503) in 23S rRNA + 2 reduced [2Fe-2S]-[ferredoxin] + 2 S-adenosyl-L-methionine = 2-methyladenosine(2503) in 23S rRNA + 5'-deoxyadenosine + L-methionine + 2 oxidized [2Fe-2S]-[ferredoxin] + S-adenosyl-L-homocysteine. It carries out the reaction adenosine(37) in tRNA + 2 reduced [2Fe-2S]-[ferredoxin] + 2 S-adenosyl-L-methionine = 2-methyladenosine(37) in tRNA + 5'-deoxyadenosine + L-methionine + 2 oxidized [2Fe-2S]-[ferredoxin] + S-adenosyl-L-homocysteine. In terms of biological role, specifically methylates position 2 of adenine 2503 in 23S rRNA and position 2 of adenine 37 in tRNAs. m2A2503 modification seems to play a crucial role in the proofreading step occurring at the peptidyl transferase center and thus would serve to optimize ribosomal fidelity. This is Dual-specificity RNA methyltransferase RlmN from Campylobacter jejuni (strain RM1221).